A 477-amino-acid chain; its full sequence is MQVLHVCSEMFPLLKTGGLADVIGALPAAQIADGVDARVLLPAFPDIRRGVTDAQVVSRRDTFAGHITLLFGHYNGVGIYLIDAPHLYDRPGSPYHDTNLFAYTDNVLRFALLGWVGAEMASGLDPFWRPDVVHAHDWHAGLAPAYLAARGRPAKSVFTVHNLAYQGMFYAHHMNDIQLPWSFFNIHGLEFNGQISFLKAGLYYADHITAVSPTYAREITEPQFAYGMEGLLQQRHREGRLSGVLNGVDEKIWSPETDLLLASRYTRDTLEDKAENKRQLQIAMGLKVDDKVPLFAVVSRLTSQKGLDLVLEALPGLLEQGGQLALLGAGDPVLQEGFLAAAAEYPGQVGVQIGYHEAFSHRIMGGADVILVPSRFEPCGLTQLYGLKYGTLPLVRRTGGLADTVSDCSLENLADGVASGFVFEDNNAWSLLRAIRRAFVLWSRPSLWRFVQRQAMAMDFSWQVAAKSYRELYYRLK.

An ADP-alpha-D-glucose-binding site is contributed by lysine 15.

Belongs to the glycosyltransferase 1 family. Bacterial/plant glycogen synthase subfamily.

The catalysed reaction is [(1-&gt;4)-alpha-D-glucosyl](n) + ADP-alpha-D-glucose = [(1-&gt;4)-alpha-D-glucosyl](n+1) + ADP + H(+). The protein operates within glycan biosynthesis; glycogen biosynthesis. In terms of biological role, synthesizes alpha-1,4-glucan chains using ADP-glucose. This is Glycogen synthase from Shigella sonnei (strain Ss046).